Consider the following 754-residue polypeptide: Carbon catabolite repressor protein 4 homolog 6 (754 aa).

2 disordered regions span residues 34-65 (PYRG…DQFV) and 85-176 (EPYR…KTPP). Over residues 50-61 (FSDRPYNDDAGR) the composition is skewed to basic and acidic residues. Polar residues-rich tracts occupy residues 96-106 (QRQQPPFNQNY) and 116-133 (GQWQ…NQNY). Positions 162 to 171 (KPSDYREWEY) are enriched in basic and acidic residues. E237 is a Mg(2+) binding site. Disordered stretches follow at residues 404–431 (VSAE…QGQV) and 494–558 (IENR…DQDI). 3 stretches are compositionally biased toward polar residues: residues 415–431 (NYTT…QGQV), 503–525 (GNLS…QHAS), and 534–545 (DRSVSSGLSETE).

This sequence belongs to the CCR4/nocturin family. Component of the CCR4-NOT complex, at least composed of CRR4 and CAF1 proteins. It depends on Mg(2+) as a cofactor.

Its subcellular location is the nucleus. The protein resides in the cytoplasm. The enzyme catalyses Exonucleolytic cleavage of poly(A) to 5'-AMP.. Acts as a catalytic component of the CCR4-NOT core complex, which in the nucleus seems to be a general transcription factor, and in the cytoplasm the major mRNA deadenylase involved in mRNA turnover. In Arabidopsis thaliana (Mouse-ear cress), this protein is Carbon catabolite repressor protein 4 homolog 6 (CCR4-6).